A 1070-amino-acid polypeptide reads, in one-letter code: [F-actin]-monooxygenase MICAL1 (1070 aa).

Residues 1 to 489 are monooxygenase domain; that stretch reads MASTISTNPA…RDLYDMEAKE (489 aa). Residues C95, 114-116, 121-123, F181, Y293, and D393 each bind FAD; these read EKR and RHN. T475 is modified (phosphothreonine). Positions 508 to 612 constitute a Calponin-homology (CH) domain; it reads VGSQEELLRW…YLSHFHSAFK (105 aa). The interval 643–690 is disordered; that stretch reads QRTRTQENGEDAGGKKPRLEVKAETPSTEEPPVPKPDEPMTPPSQQQD. Positions 646–665 are enriched in basic and acidic residues; it reads RTQENGEDAGGKKPRLEVKA. Residues 671–684 are compositionally biased toward pro residues; that stretch reads EEPPVPKPDEPMTP. One can recognise an LIM zinc-binding domain in the interval 695–757; it reads DLCALCGQHL…LQHLPQTGHE (63 aa). Residues C697, C700, H718, C721, C724, C727, C747, and H750 each contribute to the Zn(2+) site. Disordered regions lie at residues 754–838 and 865–887; these read TGHE…RSCS and MEMGEEERSSSSEEETEEEEDVP. The span at 755–766 shows a compositional bias: basic and acidic residues; the sequence is GHEEDSSDRGPE. Residues 770 to 781 are compositionally biased toward polar residues; sequence LPMSSENNTPSG. 3 positions are modified to phosphoserine: S793, S875, and S876. Residues 876–887 show a composition bias toward acidic residues; it reads SEEETEEEEDVP. Residues 904 to 1070 form an important for interaction with RAB8A region; that stretch reads GTMNNYPTWR…ELASEPGVQG (167 aa). Positions 921–1070 constitute a bMERB domain; it reads KEEEMKRFCK…ELASEPGVQG (150 aa). Residues 928–1030 adopt a coiled-coil conformation; it reads FCKAQAIQRR…EETLKTAADR (103 aa). Position 1060 is a phosphoserine (S1060).

Belongs to the Mical family. Interacts with STK38 and STK38L. Associates with the SH3 domain of NEDD9. Interacts with VIM and PLXNA3. Interacts with RAB1B, RAB8A, RAB10, RAB13 and RAB15 (in their GTP-bound forms); binding to RAB1B is of low affinity compared to other Rab proteins; at least in case of RAB8A and RAB10 can bind 2 molecules of the Rab proteins simultaneously. Interacts with GRAF1/ARHGAP26, GRAF2/ARHGAP10, RAB8A, RAB8B and RAB10; may bind simultaneously to GRAFs and Rabs and connects GRAFs to Rabs. Does not interact with RAB1 and RAB11A. FAD is required as a cofactor.

The protein localises to the cytoplasm. Its subcellular location is the cytoskeleton. It localises to the endosome membrane. The protein resides in the midbody. It carries out the reaction L-methionyl-[F-actin] + NADPH + O2 + H(+) = L-methionyl-(R)-S-oxide-[F-actin] + NADP(+) + H2O. It catalyses the reaction NADPH + O2 + H(+) = H2O2 + NADP(+). Its function is as follows. Monooxygenase that promotes depolymerization of F-actin by mediating oxidation of specific methionine residues on actin to form methionine-sulfoxide, resulting in actin filament disassembly and preventing repolymerization. In the absence of actin, it also functions as a NADPH oxidase producing H(2)O(2). Acts as a cytoskeletal regulator that connects NEDD9 to intermediate filaments. Also acts as a negative regulator of apoptosis via its interaction with STK38 and STK38L; acts by antagonizing STK38 and STK38L activation by MST1/STK4. Involved in regulation of lamina-specific connectivity in the nervous system such as the development of lamina-restricted hippocampal connections. Through redox regulation of the actin cytoskeleton controls the intracellular distribution of secretory vesicles containing L1/neurofascin/NgCAM family proteins in neurons, thereby regulating their cell surface levels. May act as Rab effector protein and play a role in vesicle trafficking. Promotes endosomal tubule extension by associating with RAB8 (RAB8A or RAB8B), RAB10 and GRAF (GRAF1/ARHGAP26 or GRAF2/ARHGAP10) on the endosomal membrane which may connect GRAFs to Rabs, thereby participating in neosynthesized Rab8-Rab10-Rab11-dependent protein export. The chain is [F-actin]-monooxygenase MICAL1 (MICAL1) from Bos taurus (Bovine).